The chain runs to 252 residues: MLAKRIIPCLDVNRGRVVKGVNFVNLRDAGDPVELAAVYDREGADEVVFLDITASAEGRDIVLDMVRRTAEQVFIPFAVGGGIRTVEDIRAILKAGADKVSINTAAVKNPGLIAEAAEKFGTQCIVAAIDAKQTGSGKWEVYIHGGRTPTGLDAVEWARRVESLGAGEILLTSMDRDGTKDGYDLLLTRAVADAVRIPVIASGGVGTLEHIAEGLTEGGADAALAASIFHFGEYSIREVKEYLAARGIAVRL.

Residues Asp11 and Asp130 contribute to the active site.

It belongs to the HisA/HisF family. Heterodimer of HisH and HisF.

Its subcellular location is the cytoplasm. The catalysed reaction is 5-[(5-phospho-1-deoxy-D-ribulos-1-ylimino)methylamino]-1-(5-phospho-beta-D-ribosyl)imidazole-4-carboxamide + L-glutamine = D-erythro-1-(imidazol-4-yl)glycerol 3-phosphate + 5-amino-1-(5-phospho-beta-D-ribosyl)imidazole-4-carboxamide + L-glutamate + H(+). It functions in the pathway amino-acid biosynthesis; L-histidine biosynthesis; L-histidine from 5-phospho-alpha-D-ribose 1-diphosphate: step 5/9. Its function is as follows. IGPS catalyzes the conversion of PRFAR and glutamine to IGP, AICAR and glutamate. The HisF subunit catalyzes the cyclization activity that produces IGP and AICAR from PRFAR using the ammonia provided by the HisH subunit. The protein is Imidazole glycerol phosphate synthase subunit HisF of Desulforudis audaxviator (strain MP104C).